The following is a 146-amino-acid chain: Acidic phospholipase A2 S14-72F (146 aa).

Positions 1 to 19 (MYPAHLLVLLAVCVSLLGA) are cleaved as a signal peptide. The propeptide occupies 20 to 27 (ASIPPQPL). Cystine bridges form between Cys38–Cys98, Cys54–Cys145, Cys56–Cys72, Cys71–Cys126, Cys78–Cys119, Cys87–Cys112, and Cys105–Cys117. Residues Tyr55, Gly57, and Gly59 each coordinate Ca(2+). Residue His75 is part of the active site. Asp76 contributes to the Ca(2+) binding site. The active site involves Asp120.

This sequence belongs to the phospholipase A2 family. Group I subfamily. D49 sub-subfamily. The cofactor is Ca(2+). Expressed by the venom gland.

The protein localises to the secreted. The catalysed reaction is a 1,2-diacyl-sn-glycero-3-phosphocholine + H2O = a 1-acyl-sn-glycero-3-phosphocholine + a fatty acid + H(+). In terms of biological role, snake venom phospholipase A2 (PLA2) that inhibits collagen-induced platelet aggregation. PLA2 catalyzes the calcium-dependent hydrolysis of the 2-acyl groups in 3-sn-phosphoglycerides. This is Acidic phospholipase A2 S14-72F from Austrelaps superbus (Lowland copperhead snake).